A 217-amino-acid chain; its full sequence is 3,4-dihydroxy-2-butanone 4-phosphate synthase (217 aa).

Residues 37–38, aspartate 42, 150–154, and glutamate 174 each bind D-ribulose 5-phosphate; these read RE and RQGHT. Glutamate 38 is a binding site for Mg(2+). A Mg(2+)-binding site is contributed by histidine 153.

This sequence belongs to the DHBP synthase family. As to quaternary structure, homodimer. Mg(2+) serves as cofactor. It depends on Mn(2+) as a cofactor.

It carries out the reaction D-ribulose 5-phosphate = (2S)-2-hydroxy-3-oxobutyl phosphate + formate + H(+). Its pathway is cofactor biosynthesis; riboflavin biosynthesis; 2-hydroxy-3-oxobutyl phosphate from D-ribulose 5-phosphate: step 1/1. In terms of biological role, catalyzes the conversion of D-ribulose 5-phosphate to formate and 3,4-dihydroxy-2-butanone 4-phosphate. The chain is 3,4-dihydroxy-2-butanone 4-phosphate synthase from Desulforamulus reducens (strain ATCC BAA-1160 / DSM 100696 / MI-1) (Desulfotomaculum reducens).